Reading from the N-terminus, the 515-residue chain is Hopanoid C-3 methylase (515 aa).

A B12-binding domain is found at 8-141 (PSPLMYTKVF…ETLARRGNID (134 aa)). The region spanning 181–395 (GTLDPCASIE…DIQHAVLPTR (215 aa)) is the Radical SAM core domain. Positions 195, 199, and 202 each coordinate [4Fe-4S] cluster.

Belongs to the radical SAM superfamily. The cofactor is [4Fe-4S] cluster.

Functionally, required for methylation of hopanoids at the C-3 position. This Methylococcus capsulatus (strain ATCC 33009 / NCIMB 11132 / Bath) protein is Hopanoid C-3 methylase.